Here is a 92-residue protein sequence, read N- to C-terminus: Small ribosomal subunit protein uS19 (92 aa).

It belongs to the universal ribosomal protein uS19 family.

Its function is as follows. Protein S19 forms a complex with S13 that binds strongly to the 16S ribosomal RNA. This is Small ribosomal subunit protein uS19 from Bifidobacterium animalis subsp. lactis (strain AD011).